The sequence spans 228 residues: MAKDVKPTRKNLMAIEDRIDLSERGHDTLEQKRDGLIMEFMDILDQAQDVRSDVSENYETAQRKIDMARAMEGDVAVRGAAAALKEHPEITTQSKNIMGVVVPQIESSKVKKSLDERGYGLLGSSARIDEAADAYEELLEKVILAAEVETAMKKMLTEIETTKRRVNALEFTLLPRLYENQEYIEQKLEEQEREEIFRLKKIKAKKEEEEKAEAAAEAAAVEDPEPAD.

Basic and acidic residues predominate over residues K205–A214. Positions K205–D228 are disordered.

The protein belongs to the V-ATPase D subunit family. Has multiple subunits with at least A(3), B(3), C, D, E, F, H, I and proteolipid K(x).

It is found in the cell membrane. Functionally, component of the A-type ATP synthase that produces ATP from ADP in the presence of a proton gradient across the membrane. This chain is A-type ATP synthase subunit D, found in Halorubrum lacusprofundi (strain ATCC 49239 / DSM 5036 / JCM 8891 / ACAM 34).